The primary structure comprises 211 residues: 2,3-bisphosphoglycerate-dependent phosphoglycerate mutase (211 aa).

Residues 9–16, 22–23, R61, 88–91, K99, 115–116, and 159–160 each bind substrate; these read RHGQSDWN, TG, ERDY, RR, and GN. Residue H10 is the Tele-phosphohistidine intermediate of the active site. The Proton donor/acceptor role is filled by E88.

This sequence belongs to the phosphoglycerate mutase family. BPG-dependent PGAM subfamily. In terms of assembly, homodimer.

The enzyme catalyses (2R)-2-phosphoglycerate = (2R)-3-phosphoglycerate. It functions in the pathway carbohydrate degradation; glycolysis; pyruvate from D-glyceraldehyde 3-phosphate: step 3/5. In terms of biological role, catalyzes the interconversion of 2-phosphoglycerate and 3-phosphoglycerate. In Rhizobium johnstonii (strain DSM 114642 / LMG 32736 / 3841) (Rhizobium leguminosarum bv. viciae), this protein is 2,3-bisphosphoglycerate-dependent phosphoglycerate mutase.